The sequence spans 458 residues: 3-isopropylmalate dehydratase large subunit (458 aa).

3 residues coordinate [4Fe-4S] cluster: cysteine 339, cysteine 399, and cysteine 402.

Belongs to the aconitase/IPM isomerase family. LeuC type 1 subfamily. As to quaternary structure, heterodimer of LeuC and LeuD. It depends on [4Fe-4S] cluster as a cofactor.

It carries out the reaction (2R,3S)-3-isopropylmalate = (2S)-2-isopropylmalate. The protein operates within amino-acid biosynthesis; L-leucine biosynthesis; L-leucine from 3-methyl-2-oxobutanoate: step 2/4. Functionally, catalyzes the isomerization between 2-isopropylmalate and 3-isopropylmalate, via the formation of 2-isopropylmaleate. The sequence is that of 3-isopropylmalate dehydratase large subunit from Lactococcus lactis subsp. cremoris (strain MG1363).